Reading from the N-terminus, the 60-residue chain is Potassium channel toxin ImKTx88 (60 aa).

Positions 1–22 (MSNFSVFLIALLFCSVFILSEA) are cleaved as a signal peptide. 3 cysteine pairs are disulfide-bonded: Cys-30–Cys-51, Cys-36–Cys-56, and Cys-40–Cys-58.

Belongs to the short scorpion toxin superfamily. Potassium channel inhibitor family. As to expression, expressed by the venom gland.

The protein localises to the secreted. Functionally, recombinant toxin selectively inhibits Kv1.3/KCNA3 potassium channels with an IC(50) of 91 pM. The chain is Potassium channel toxin ImKTx88 from Isometrus maculatus (Lesser brown scorpion).